A 179-amino-acid polypeptide reads, in one-letter code: Peptide deformylase (179 aa).

2 residues coordinate Fe cation: Cys-102 and His-144. Residue Glu-145 is part of the active site. His-148 is a binding site for Fe cation.

The protein belongs to the polypeptide deformylase family. The cofactor is Fe(2+).

It carries out the reaction N-terminal N-formyl-L-methionyl-[peptide] + H2O = N-terminal L-methionyl-[peptide] + formate. Removes the formyl group from the N-terminal Met of newly synthesized proteins. Requires at least a dipeptide for an efficient rate of reaction. N-terminal L-methionine is a prerequisite for activity but the enzyme has broad specificity at other positions. The chain is Peptide deformylase from Wolbachia sp. subsp. Drosophila simulans (strain wRi).